Here is a 251-residue protein sequence, read N- to C-terminus: tRNA pseudouridine synthase A 1 (251 aa).

Catalysis depends on aspartate 52, which acts as the Nucleophile. Tyrosine 110 serves as a coordination point for substrate.

It belongs to the tRNA pseudouridine synthase TruA family. Homodimer.

It carries out the reaction uridine(38/39/40) in tRNA = pseudouridine(38/39/40) in tRNA. Functionally, formation of pseudouridine at positions 38, 39 and 40 in the anticodon stem and loop of transfer RNAs. The protein is tRNA pseudouridine synthase A 1 of Desulfotalea psychrophila (strain LSv54 / DSM 12343).